The primary structure comprises 357 residues: MQTVLALETSCDESAAAVVRHKADGSVEVLASRIASQVEEHALWGGVVPEIASRRHVEALPALVQEVLRESALSISELNAVAATVAPGLAGALMVASVTGRTLAALHQVPFLGIHHLEGHLASAALGEQAPAPPYLVLLVSGGHTELIRVGLNGEMERLGRSHDDAAGEAFDKVARLLGLGYPGGPAIQAIAVSGNAKRFSLPKGRISLRGGGFHPYDFSFSGLKTAMLRTVESCQSSGGDLPLADLAASFEQVVADVLVERAIRCALDHNLTQLVMVGGVAANQRLRLLMAKQGKQHGVAISIAPLAYCTDNAAMIGAAALNRLSRGVLSSSDETGVAARWPLERADALYDASPAF.

Fe cation-binding residues include His116 and His120. Residues 139–143 (LVSGG), Asp172, Gly185, and Asn284 each bind substrate. Asp312 serves as a coordination point for Fe cation.

This sequence belongs to the KAE1 / TsaD family. Fe(2+) is required as a cofactor.

It localises to the cytoplasm. It catalyses the reaction L-threonylcarbamoyladenylate + adenosine(37) in tRNA = N(6)-L-threonylcarbamoyladenosine(37) in tRNA + AMP + H(+). Required for the formation of a threonylcarbamoyl group on adenosine at position 37 (t(6)A37) in tRNAs that read codons beginning with adenine. Is involved in the transfer of the threonylcarbamoyl moiety of threonylcarbamoyl-AMP (TC-AMP) to the N6 group of A37, together with TsaE and TsaB. TsaD likely plays a direct catalytic role in this reaction. This Synechococcus sp. (strain CC9902) protein is tRNA N6-adenosine threonylcarbamoyltransferase.